The following is a 341-amino-acid chain: Methionine import ATP-binding protein MetN 2 (341 aa).

An ABC transporter domain is found at 2 to 241; it reads IELKEVVKEY…PQHAVTKRFV (240 aa). 38 to 45 serves as a coordination point for ATP; it reads GFSGAGKS.

This sequence belongs to the ABC transporter superfamily. Methionine importer (TC 3.A.1.24) family. The complex is composed of two ATP-binding proteins (MetN), two transmembrane proteins (MetI) and a solute-binding protein (MetQ).

It localises to the cell membrane. It carries out the reaction L-methionine(out) + ATP + H2O = L-methionine(in) + ADP + phosphate + H(+). The catalysed reaction is D-methionine(out) + ATP + H2O = D-methionine(in) + ADP + phosphate + H(+). In terms of biological role, part of the ABC transporter complex MetNIQ involved in methionine import. Responsible for energy coupling to the transport system. The sequence is that of Methionine import ATP-binding protein MetN 2 from Staphylococcus aureus (strain MRSA252).